The chain runs to 160 residues: Major pollen allergen Bet v 1-M/N (160 aa).

Brassinolide is bound by residues K55, Y82, Y84, and N101.

This sequence belongs to the BetVI family.

Its subcellular location is the cytoplasm. May be a general steroid carrier protein. This chain is Major pollen allergen Bet v 1-M/N (BETV1M), found in Betula pendula (European white birch).